A 166-amino-acid polypeptide reads, in one-letter code: Deglycase PYRAB04690 (166 aa).

The PfpI endopeptidase domain maps to 1–166 (MRVLILSADQ…WMREFVKLLK (166 aa)). The active site involves His-101.

Belongs to the peptidase C56 family. In terms of assembly, homohexamer formed by a dimer of trimers that assemble into a hollow ring structure.

The protein resides in the cytoplasm. It catalyses the reaction N(omega)-(1-hydroxy-2-oxopropyl)-L-arginyl-[protein] + H2O = lactate + L-arginyl-[protein] + H(+). It carries out the reaction N(6)-(1-hydroxy-2-oxopropyl)-L-lysyl-[protein] + H2O = lactate + L-lysyl-[protein] + H(+). The catalysed reaction is S-(1-hydroxy-2-oxopropyl)-L-cysteinyl-[protein] + H2O = lactate + L-cysteinyl-[protein] + H(+). The enzyme catalyses N(omega)-(1-hydroxy-2-oxoethyl)-L-arginyl-[protein] + H2O = L-arginyl-[protein] + glycolate + H(+). It catalyses the reaction N(6)-(1-hydroxy-2-oxoethyl)-L-lysyl-[protein] + H2O = glycolate + L-lysyl-[protein] + H(+). It carries out the reaction S-(1-hydroxy-2-oxoethyl)-L-cysteinyl-[protein] + H2O = glycolate + L-cysteinyl-[protein] + H(+). Its function is as follows. Deglycase that catalyzes the deglycation of the Maillard adducts formed between amino groups of proteins and reactive carbonyl groups of glyoxals. Thus, functions as a protein deglycase that repairs methylglyoxal- and glyoxal-glycated proteins, and releases repaired proteins and lactate or glycolate, respectively. Deglycates cysteine, arginine and lysine residues in proteins, and thus reactivates these proteins by reversing glycation by glyoxals. Acts on early glycation intermediates (hemithioacetals and aminocarbinols), preventing the formation of advanced glycation endproducts (AGE) that cause irreversible damage. Also displays proteolytic activity. The sequence is that of Deglycase PYRAB04690 from Pyrococcus abyssi (strain GE5 / Orsay).